The primary structure comprises 267 residues: Ribosomal RNA small subunit methyltransferase A (267 aa).

The S-adenosyl-L-methionine site is built by Asn-18, Leu-20, Gly-45, Glu-66, Asp-91, and Asn-112.

It belongs to the class I-like SAM-binding methyltransferase superfamily. rRNA adenine N(6)-methyltransferase family. RsmA subfamily.

The protein resides in the cytoplasm. The enzyme catalyses adenosine(1518)/adenosine(1519) in 16S rRNA + 4 S-adenosyl-L-methionine = N(6)-dimethyladenosine(1518)/N(6)-dimethyladenosine(1519) in 16S rRNA + 4 S-adenosyl-L-homocysteine + 4 H(+). Functionally, specifically dimethylates two adjacent adenosines (A1518 and A1519) in the loop of a conserved hairpin near the 3'-end of 16S rRNA in the 30S particle. May play a critical role in biogenesis of 30S subunits. This chain is Ribosomal RNA small subunit methyltransferase A, found in Shewanella amazonensis (strain ATCC BAA-1098 / SB2B).